The primary structure comprises 73 residues: DNA-directed RNA polymerase subunit Rpo10 (73 aa).

Zn(2+) contacts are provided by Cys-7, Cys-10, Cys-44, and Cys-45.

The protein belongs to the archaeal Rpo10/eukaryotic RPB10 RNA polymerase subunit family. In terms of assembly, part of the RNA polymerase complex. Forms an Rpo3-Rpo10-Rpo11-Rpo12 complex upon coexpression. Requires Zn(2+) as cofactor.

The protein resides in the cytoplasm. The enzyme catalyses RNA(n) + a ribonucleoside 5'-triphosphate = RNA(n+1) + diphosphate. In terms of biological role, DNA-dependent RNA polymerase (RNAP) catalyzes the transcription of DNA into RNA using the four ribonucleoside triphosphates as substrates. This chain is DNA-directed RNA polymerase subunit Rpo10, found in Methanocaldococcus jannaschii (strain ATCC 43067 / DSM 2661 / JAL-1 / JCM 10045 / NBRC 100440) (Methanococcus jannaschii).